A 473-amino-acid chain; its full sequence is Histidinol dehydrogenase, chloroplastic (473 aa).

Residues 1-28 (MSLRPGRAHPLAASPLHTPLPARPRPQL) form a disordered region. NAD(+) is bound by residues Tyr-162, Gln-224, and Asn-247. Substrate contacts are provided by Ser-273, Gln-295, and His-298. 2 residues coordinate Zn(2+): Gln-295 and His-298. Active-site proton acceptor residues include Glu-363 and His-364. Substrate contacts are provided by His-364, Asp-397, Glu-451, and His-456. Residue Asp-397 coordinates Zn(2+). Position 456 (His-456) interacts with Zn(2+).

The protein belongs to the histidinol dehydrogenase family. Requires Zn(2+) as cofactor.

Its subcellular location is the plastid. It is found in the chloroplast. It carries out the reaction L-histidinol + 2 NAD(+) + H2O = L-histidine + 2 NADH + 3 H(+). Its pathway is amino-acid biosynthesis; L-histidine biosynthesis; L-histidine from 5-phospho-alpha-D-ribose 1-diphosphate: step 9/9. In terms of biological role, catalyzes the sequential NAD-dependent oxidations of L-histidinol to L-histidinaldehyde and then to L-histidine. The protein is Histidinol dehydrogenase, chloroplastic (HDH) of Oryza sativa subsp. japonica (Rice).